Reading from the N-terminus, the 590-residue chain is Rho GTPase-activating protein 36 (590 aa).

Residues 214–414 (MSLNPIAQQI…AMIDNWDILF (201 aa)) form the Rho-GAP domain. A disordered region spans residues 526 to 590 (IPNNEDTDSD…KGKFATRFFP (65 aa)).

As to quaternary structure, may interacts (via the Rho-GAP domain) with the active form of RAC1.

Its function is as follows. GTPase activator for the Rho-type GTPases by converting them to an inactive GDP-bound state. The sequence is that of Rho GTPase-activating protein 36 (Arhgap36) from Mus musculus (Mouse).